The following is a 79-amino-acid chain: Conotoxin 8 (79 aa).

The signal sequence occupies residues 1-22; it reads MKLTCVLIITVLFLTASQLITA. The propeptide occupies 23 to 47; that stretch reads DYSRGQRQYRAVRLGDEMRNFKGAR. Cystine bridges form between cysteine 49-cysteine 62, cysteine 56-cysteine 67, and cysteine 61-cysteine 77.

It belongs to the conotoxin O1 superfamily. Expressed by the venom duct.

It is found in the secreted. The polypeptide is Conotoxin 8 (Conus vexillum (Flag cone)).